The primary structure comprises 702 residues: Translation factor GUF1 homolog, chloroplastic (702 aa).

The segment covering 1-30 (MASAAPASRGAARASTAARDAPFAAAARGP) has biased composition (low complexity). The interval 1–41 (MASAAPASRGAARASTAARDAPFAAAARGPGRFRRDGNGRN) is disordered. Residues 87–283 (SQIRNFSIIA…NIVKMIPPPP (197 aa)) form the tr-type G domain. Residues 96–103 (AHIDHGKS), 162–166 (DTPGH), and 216–219 (NKID) contribute to the GTP site.

Belongs to the TRAFAC class translation factor GTPase superfamily. Classic translation factor GTPase family. LepA subfamily.

The protein localises to the plastid. It localises to the chloroplast. It catalyses the reaction GTP + H2O = GDP + phosphate + H(+). Functionally, promotes chloroplast protein synthesis. May act as a fidelity factor of the translation reaction, by catalyzing a one-codon backward translocation of tRNAs on improperly translocated ribosomes. This is Translation factor GUF1 homolog, chloroplastic from Micromonas pusilla (strain CCMP1545) (Picoplanktonic green alga).